The primary structure comprises 116 residues: Co-chaperonin GroES (116 aa).

The protein belongs to the GroES chaperonin family. In terms of assembly, heptamer of 7 subunits arranged in a ring. Interacts with the chaperonin GroEL.

The protein resides in the cytoplasm. Together with the chaperonin GroEL, plays an essential role in assisting protein folding. The GroEL-GroES system forms a nano-cage that allows encapsulation of the non-native substrate proteins and provides a physical environment optimized to promote and accelerate protein folding. GroES binds to the apical surface of the GroEL ring, thereby capping the opening of the GroEL channel. This Mycoplasma pneumoniae (strain ATCC 29342 / M129 / Subtype 1) (Mycoplasmoides pneumoniae) protein is Co-chaperonin GroES.